The following is a 610-amino-acid chain: Elongation factor 4 (610 aa).

One can recognise a tr-type G domain in the interval 14–196 (NRIRNFSIIA…ALVANIPPPK (183 aa)). Residues 26–31 (DHGKST) and 143–146 (NKID) each bind GTP.

This sequence belongs to the TRAFAC class translation factor GTPase superfamily. Classic translation factor GTPase family. LepA subfamily.

The protein resides in the cell inner membrane. It carries out the reaction GTP + H2O = GDP + phosphate + H(+). Its function is as follows. Required for accurate and efficient protein synthesis under certain stress conditions. May act as a fidelity factor of the translation reaction, by catalyzing a one-codon backward translocation of tRNAs on improperly translocated ribosomes. Back-translocation proceeds from a post-translocation (POST) complex to a pre-translocation (PRE) complex, thus giving elongation factor G a second chance to translocate the tRNAs correctly. Binds to ribosomes in a GTP-dependent manner. This Legionella pneumophila (strain Paris) protein is Elongation factor 4.